Consider the following 352-residue polypeptide: Ribosomal RNA large subunit methyltransferase M (352 aa).

S-adenosyl-L-methionine is bound by residues Ser187, Ala218–Gly221, Asp237, Asp257, and Asp273. Catalysis depends on Lys302, which acts as the Proton acceptor.

Belongs to the class I-like SAM-binding methyltransferase superfamily. RNA methyltransferase RlmE family. RlmM subfamily. In terms of assembly, monomer.

The protein localises to the cytoplasm. The enzyme catalyses cytidine(2498) in 23S rRNA + S-adenosyl-L-methionine = 2'-O-methylcytidine(2498) in 23S rRNA + S-adenosyl-L-homocysteine + H(+). Its function is as follows. Catalyzes the 2'-O-methylation at nucleotide C2498 in 23S rRNA. The chain is Ribosomal RNA large subunit methyltransferase M from Methylococcus capsulatus (strain ATCC 33009 / NCIMB 11132 / Bath).